Consider the following 288-residue polypeptide: MNGCCSQDPTSKRLEGKVAVITGGASGIGACTVKLFVKHGAKVVIADVQDELGHSLCKEIGSEDVVTYVHCDVSSDSDVKNVVDSAVSKYGKLDIMFSNAGVSGGLDPRILATENDEFKKVFEVNVFGGFLAAKHAARVMIPEKKGCILFTSSNSAAIAIPGPHSYVVSKHALNGLMKNLSAELGQHGIRVNCVSPFGVVTPMMATAFGMKDADPEVVKATIEGLLASAANLKEVTLGAEDIANAALYLASDEAKYVSGLNLVVDGGYSVTNPSFTATLQKAFAVAHV.

NAD(+) contacts are provided by residues 26-28, Asp47, 72-73, and 99-101; these read SGI, DV, and NAG. The Proton donor role is filled by Ser153. Ser153 and Tyr166 together coordinate substrate. Positions 166, 170, and 201 each coordinate NAD(+). The active-site Proton acceptor is Tyr166. Lys170 serves as the catalytic Proton donor/acceptor.

Belongs to the short-chain dehydrogenases/reductases (SDR) family. Homodimer. As to expression, expressed in mature seeds.

It carries out the reaction 4,5,8-trihydroxycasbene + 2 NAD(+) = jolkinol C + 2 NADH + 2 H(+). The catalysed reaction is a secondary alcohol + NAD(+) = a ketone + NADH + H(+). The enzyme catalyses a primary alcohol + NAD(+) = an aldehyde + NADH + H(+). It participates in secondary metabolite biosynthesis; terpenoid biosynthesis. Involved in the biosynthesis of macrocyclic lathyrane type diterpenoids (also called Euphorbia factors) natural products, including the cyclization route from casbene to jolkinol C, a precursor for ingenol mebutate that is used to treat actinic keratosis, a precancerous skin condition. Catalyzes the conversion of 4,5,8-trihydroxycasbene into jolkinol C in presence of NAD. Also mediates the formation of casbene dione derivative and 4-ketocasbene from 4-hydroxy-8-ketocasbene and 4-hydroxycasbene, respectively. Together with CYP71D445, triggers the biosynthesis of 8-ketocasbene from 8-hydroxycasbene. This chain is Short chain aldehyde dehydrogenase 1, found in Euphorbia lathyris (Caper spurge).